A 192-amino-acid chain; its full sequence is Cell division protein SepF (192 aa).

Residues 15–70 form a disordered region; that stretch reads GDPLEYEEDGEEYEQVYREENKREEARRATAGTAAAATPTAAAQASDAAPMGSGPA. Positions 18-28 are enriched in acidic residues; it reads LEYEEDGEEYE. Positions 29 to 42 are enriched in basic and acidic residues; that stretch reads QVYREENKREEARR. Over residues 43-63 the composition is skewed to low complexity; it reads ATAGTAAAATPTAAAQASDAA.

Belongs to the SepF family. In terms of assembly, homodimer. Interacts with FtsZ.

It localises to the cytoplasm. Functionally, cell division protein that is part of the divisome complex and is recruited early to the Z-ring. Probably stimulates Z-ring formation, perhaps through the cross-linking of FtsZ protofilaments. Its function overlaps with FtsA. The polypeptide is Cell division protein SepF (Gloeobacter violaceus (strain ATCC 29082 / PCC 7421)).